Consider the following 150-residue polypeptide: Ribosome maturation factor RimP (150 aa).

The protein belongs to the RimP family.

It localises to the cytoplasm. In terms of biological role, required for maturation of 30S ribosomal subunits. This chain is Ribosome maturation factor RimP, found in Thermotoga sp. (strain RQ2).